Consider the following 231-residue polypeptide: Platelet-activating factor acetylhydrolase IB subunit alpha1 (231 aa).

Position 2 is an N-acetylserine (serine 2). Serine 2 carries the phosphoserine modification. Catalysis depends on residues serine 47, aspartate 192, and histidine 195.

Belongs to the 'GDSL' lipolytic enzyme family. Platelet-activating factor acetylhydrolase IB beta/gamma subunits subfamily. Forms a catalytic dimer which is either homodimer (alpha1/alpha1 homodimer) or heterodimer with PAFAH1B2 (alpha1/alpha2 heterodimer). Component of the cytosolic (PAF-AH (I)) heterotetrameric enzyme, which is composed of PAFAH1B1 (beta), PAFAH1B2 (alpha2) and PAFAH1B3 (alpha1) subunits. The catalytic activity of the enzyme resides in the alpha1 (PAFAH1B3) and alpha2 (PAFAH1B2) subunits, whereas the beta subunit (PAFAH1B1) has regulatory activity. Trimer formation is not essential for the catalytic activity. Interacts with VLDLR; this interaction may modulate the Reelin pathway. In terms of tissue distribution, in the adult, expressed in brain, skeletal muscle, kidney, thymus, spleen, colon, testis, ovary and peripheral blood leukocytes. In the fetus, highest expression occurs in brain.

The protein resides in the cytoplasm. It catalyses the reaction a 1-O-alkyl-2-acetyl-sn-glycero-3-phosphocholine + H2O = a 1-O-alkyl-sn-glycero-3-phosphocholine + acetate + H(+). The catalysed reaction is 1-O-hexadecyl-2-acetyl-sn-glycero-3-phosphocholine + H2O = 1-O-hexadecyl-sn-glycero-3-phosphocholine + acetate + H(+). The enzyme catalyses 1-O-hexadecyl-2-acetyl-sn-glycero-3-phosphate + H2O = 1-O-hexadecyl-sn-glycero-3-phosphate + acetate + H(+). Beta subunit (PAFAH1B1) inhibits the acetylhydrolase activity of the alpha1/alpha1 catalytic homodimer. In terms of biological role, alpha1 catalytic subunit of the cytosolic type I platelet-activating factor (PAF) acetylhydrolase (PAF-AH (I)) heterotetrameric enzyme that catalyzes the hydrolyze of the acetyl group at the sn-2 position of PAF and its analogs and modulates the action of PAF. The activity and substrate specificity of PAF-AH (I) are affected by its subunit composition. Both alpha1/alpha1 homodimer (PAFAH1B3/PAFAH1B3 homodimer) and alpha1/alpha2 heterodimer(PAFAH1B3/PAFAH1B2 heterodimer) hydrolyze 1-O-alkyl-2-acetyl-sn-glycero-3-phosphoric acid (AAGPA) more efficiently than PAF, but they have little hydrolytic activity towards 1-O-alkyl-2-acetyl-sn-glycero-3-phosphorylethanolamine (AAGPE). Plays an important role during the development of brain. This Homo sapiens (Human) protein is Platelet-activating factor acetylhydrolase IB subunit alpha1.